The following is a 632-amino-acid chain: MHGLLLAGLAAALPLGVAGLPARQQSGLSPRGIDINPYRFASMAKYSEHKATSQMVHSFSYSKDDDYVATATKLVKSTFPNMTFRTVKDHYIGTNGIGHVHFKQTAHGIDIDNADFNVNIGRDGKVFTFGNSFYEGEMPKTNPLTKRDFADPVKALHGAIKTLKLPVKPQSAKAMPMKEAETFMFEGTSGALSEPMAKLVYIQKDGKLHLTWRVETDVGDNWLLSYVDSKETETVHNVVDYVASADYKVFAWGLNDPTEGQPTMIKDPWNTTGSGSPFTWHGDGEMDYTVTRGNNIAAQDNPSGGGQWENNYRPESPELSFVYEYNEQMEPEQFKDFAITQLFYTTNTFHDLLYSFGFTEEAGNFQMNNNGKGGEGNDFAICNAQDGSGTNNANFATPPDGQNGRMRMYTWTTAQPSRDGDLEAGIVIHEYAHGLSNRLCGGPANSNCLSELEAGGMGEGWGDFYATAIRLKQDDTRETDYTMGEWAANMEGGIREYPYSTNMQTNPYTYADVEGMSEVHGIGTVWATILYDVLWNLIDEHGMSKNIMPKFVNGAPSDGRNLAMKLVLDGMTLMPCNPNFVQARDAIIDADQALTNGQNKCALMKAFSKRGLGSNYKHGKNRVNNFDMPADC.

Positions 1–19 (MHGLLLAGLAAALPLGVAG) are cleaved as a signal peptide. Residues 20 to 244 (LPARQQSGLS…VHNVVDYVAS (225 aa)) constitute a propeptide that is removed on maturation. Asn270 is a glycosylation site (N-linked (GlcNAc...) asparagine). His429 is a Zn(2+) binding site. Glu430 is an active-site residue. His433 provides a ligand contact to Zn(2+).

It belongs to the peptidase M36 family. It depends on Zn(2+) as a cofactor.

The protein localises to the secreted. In terms of biological role, secreted metalloproteinase probably acting as a virulence factor. In Arthroderma benhamiae (Trichophyton mentagrophytes), this protein is Extracellular metalloproteinase 2 (MEP2).